Consider the following 572-residue polypeptide: Proline--tRNA ligase (572 aa).

This sequence belongs to the class-II aminoacyl-tRNA synthetase family. ProS type 1 subfamily. As to quaternary structure, homodimer.

It localises to the cytoplasm. The enzyme catalyses tRNA(Pro) + L-proline + ATP = L-prolyl-tRNA(Pro) + AMP + diphosphate. Catalyzes the attachment of proline to tRNA(Pro) in a two-step reaction: proline is first activated by ATP to form Pro-AMP and then transferred to the acceptor end of tRNA(Pro). As ProRS can inadvertently accommodate and process non-cognate amino acids such as alanine and cysteine, to avoid such errors it has two additional distinct editing activities against alanine. One activity is designated as 'pretransfer' editing and involves the tRNA(Pro)-independent hydrolysis of activated Ala-AMP. The other activity is designated 'posttransfer' editing and involves deacylation of mischarged Ala-tRNA(Pro). The misacylated Cys-tRNA(Pro) is not edited by ProRS. This chain is Proline--tRNA ligase, found in Leuconostoc mesenteroides subsp. mesenteroides (strain ATCC 8293 / DSM 20343 / BCRC 11652 / CCM 1803 / JCM 6124 / NCDO 523 / NBRC 100496 / NCIMB 8023 / NCTC 12954 / NRRL B-1118 / 37Y).